The following is a 127-amino-acid chain: Small ribosomal subunit protein uS11 (127 aa).

The protein belongs to the universal ribosomal protein uS11 family. As to quaternary structure, part of the 30S ribosomal subunit. Interacts with proteins S7 and S18. Binds to IF-3.

Functionally, located on the platform of the 30S subunit, it bridges several disparate RNA helices of the 16S rRNA. Forms part of the Shine-Dalgarno cleft in the 70S ribosome. The protein is Small ribosomal subunit protein uS11 of Rickettsia felis (strain ATCC VR-1525 / URRWXCal2) (Rickettsia azadi).